Here is a 283-residue protein sequence, read N- to C-terminus: Protein ATAF2 (283 aa).

Residues 7–159 (LPAGFRFHPT…DWVLCRIYNK (153 aa)) enclose the NAC domain. A DNA-binding region spans residues 103–165 (LGIKKALVFY…IYNKKGTMEK (63 aa)). The interval 171 to 211 (EKPRTTTMAEQSSSPFDTSDSTYPTLQEDDSSSSGGHGHVV) is disordered. Residues 175–195 (TTTMAEQSSSPFDTSDSTYPT) are compositionally biased toward polar residues.

In terms of assembly, homodimer. Interacts with AHK2. Interacts with AHL12 and AHL27. Interacts with the helicase domain of the tobamovirus (TMV) replicase. In terms of tissue distribution, expressed in roots, cotyledons, rosette leaves, cauline leaves and mature flowers. Expressed at low levels in stems and flower buds.

The protein localises to the nucleus. Its function is as follows. Involved in disease resistance response. May function as repressor of pathogenesis-related proteins. May function in the regulation of host basal defense responses against viral infection. Transcriptional activator involved in responses to wounding and infection with tobamovirus (TMV). Binds to the DNA sequences 5'-AAAATATCT-3' and 5'AGATTTTT-3' of CYP734A1/BAS1 and CYP72C1/SOB7 promoters, respectively. Acts as a suppressor of the brassinosteroid (BR)-inactivating enzymes CYP734A1/BAS1 and CYP72C1/SOB7, and prevents their expression in almost all tissues. Plays a central role in integrating BR homeostasis and seedling development. Regulates the spatial regulation of BR homeostasis and participates in the regulation of hypocotyl elongation and root growth by suppressing BR catabolism. Mediates connection between BR catabolism and photomorphogenesis. Binds to, and transactivates the promoter of the auxin biosynthetic gene NIT2. Stress-responsive NAC transcription factor involved in ABA-inducible leaf senescence signaling. Required for normal seed development and morphology. The polypeptide is Protein ATAF2 (NAC081) (Arabidopsis thaliana (Mouse-ear cress)).